Here is a 657-residue protein sequence, read N- to C-terminus: Filensin (657 aa).

Positions 1 to 38 are head; sequence MYRSSFLREVRKEKYERSDAYDELRGSPEFDSLAQAQG. The 281-residue stretch at 38-318 folds into the IF rod domain; it reads GLENLQELNE…RIIENEDSRL (281 aa). Residues 39–73 form a coil 1A region; sequence LENLQELNERFASYINRARVLEQRNTILRKQLETF. A linker 1 region spans residues 74 to 82; the sequence is QRMDELVGL. Residues 83–182 are coil 1B; that stretch reads DEAFAGQIEF…RYKKNLMEIQ (100 aa). The segment at 183–199 is linker 12; that stretch reads TYVNILQQIIQTTPRVS. The segment at 200–318 is coil 2; sequence PITTGISEEK…RIIENEDSRL (119 aa). The tract at residues 319–657 is tail; that stretch reads NSAIAGTPVT…SKKKPGDKGS (339 aa). Disordered stretches follow at residues 503–530 and 565–593; these read IGGD…ICER and PDVS…TDHD. Over residues 519-530 the composition is skewed to basic and acidic residues; sequence PSEKEKRDICER.

It belongs to the intermediate filament family. In terms of tissue distribution, detected in eye lens fiber cells (at protein level). Detected in embryonic eye lens.

The protein resides in the cell membrane. Its subcellular location is the cytoplasm. It is found in the cytoskeleton. It localises to the cell cortex. Functionally, required for the correct formation of lens intermediate filaments. The polypeptide is Filensin (BFSP1) (Gallus gallus (Chicken)).